Reading from the N-terminus, the 451-residue chain is Ubiquinone biosynthesis monooxygenase COQ6, mitochondrial (451 aa).

The protein belongs to the UbiH/COQ6 family. As to quaternary structure, component of a multi-subunit COQ enzyme complex. The cofactor is FAD.

It localises to the mitochondrion inner membrane. It carries out the reaction a 4-hydroxy-3-(all-trans-polyprenyl)benzoate + 2 reduced [2Fe-2S]-[ferredoxin] + O2 + 2 H(+) = a 3,4-dihydroxy-5-(all-trans-polyprenyl)benzoate + 2 oxidized [2Fe-2S]-[ferredoxin] + H2O. It catalyses the reaction a 2-methoxy-6-(all-trans-polyprenyl)phenol + 2 reduced [2Fe-2S]-[ferredoxin] + O2 + 2 H(+) = a 2-methoxy-6-(all-trans-polyprenyl)benzene-1,4-diol + 2 oxidized [2Fe-2S]-[ferredoxin] + H2O. It participates in cofactor biosynthesis; ubiquinone biosynthesis. Functionally, FAD-dependent monooxygenase required for two non-consecutive steps during ubiquinone biosynthesis. Required for the C5-ring hydroxylation during ubiquinone biosynthesis by catalyzing the hydroxylation of 4-hydroxy-3-(all-trans-polyprenyl)benzoic acid to 3,4-dihydroxy-5-(all-trans-polyprenyl)benzoic acid. Also acts downstream of coq4, for the C1-hydroxylation during ubiquinone biosynthesis by catalyzing the hydroxylation of 2-methoxy-6-(all-trans-polyprenyl)phenol to 2-methoxy-6-(all-trans-polyprenyl)benzene-1,4-diol. The electrons required for the hydroxylation reaction are funneled indirectly to coq-6 from NADPH via a ferredoxin/ferredoxin reductase system. This is Ubiquinone biosynthesis monooxygenase COQ6, mitochondrial from Caenorhabditis elegans.